A 286-amino-acid chain; its full sequence is E3 ubiquitin-protein ligase RNF170 (286 aa).

Topologically, residues 1–52 are lumenal; it reads MQRYWRFQDNKIQDICFGVLGESWIQRPVMARYYSEGQSLQQDDSFIEGVSD. The chain crosses the membrane as a helical span at residues 53 to 73; sequence QVLVAVVVSLALTATLLYALL. Residues 74–229 lie on the Cytoplasmic side of the membrane; that stretch reads RNVQQNIHPE…GGLFWMFRIR (156 aa). An RING-type zinc finger spans residues 115 to 158; the sequence is CPICLHQASFPVETNCGHLFCGSCIIAYWRYGSWLGAISCPICR. A helical transmembrane segment spans residues 230-250; the sequence is IMLCLMGAFFYLISPLDFVPE. Position 251 (A251) is a topological domain, lumenal. The chain crosses the membrane as a helical span at residues 252-272; it reads LFGILGFLDDFFVIFLLLIYI. The Cytoplasmic segment spans residues 273–286; the sequence is SIMYREVITQRLTR.

As to quaternary structure, constitutively associated with the ERLIN1/ERLIN 2 complex. Interacts with activated ITPR1.

The protein localises to the endoplasmic reticulum membrane. The enzyme catalyses S-ubiquitinyl-[E2 ubiquitin-conjugating enzyme]-L-cysteine + [acceptor protein]-L-lysine = [E2 ubiquitin-conjugating enzyme]-L-cysteine + N(6)-ubiquitinyl-[acceptor protein]-L-lysine.. It functions in the pathway protein modification; protein ubiquitination. E3 ubiquitin-protein ligase that plays an essential role in stimulus-induced inositol 1,4,5-trisphosphate receptor type 1 (ITPR1) ubiquitination and degradation via the endoplasmic reticulum-associated degradation (ERAD) pathway. Also involved in ITPR1 turnover in resting cells. Selectively inhibits the TLR3-triggered innate immune response by promoting the 'Lys-48'-linked polyubiquitination and degradation of TLR3. The protein is E3 ubiquitin-protein ligase RNF170 (Rnf170) of Mus musculus (Mouse).